The primary structure comprises 1343 residues: Protein cordon-bleu (1343 aa).

Disordered stretches follow at residues 1–51 (MNLG…GDCK), 301–479 (KVEL…PAAE), 522–613 (VSVA…NGYE), 733–808 (IDKP…TRVL), 1056–1077 (EKPT…KSLD), and 1105–1148 (INNF…NVFG). Positions 20-30 (APPPPRPPQPA) are enriched in pro residues. Residues 305–310 (KKRRAP) carry the KKRRAP 1 motif. Positions 324–335 (SQISLGSPSSHN) are enriched in polar residues. The short motif at 338–343 (KKRKAP) is the KKRRAP 2 element. Pro residues predominate over residues 343-354 (PAPPPTPPPSTP). Residues 390–400 (DLSHSIEDSEP) are compositionally biased toward basic and acidic residues. Positions 406-422 (SSSSGDDAAAVGSSSSS) are enriched in low complexity. Residues 445 to 460 (PEPKPEYEPELKKEAS) are compositionally biased toward basic and acidic residues. The segment covering 552-573 (ERMQSVSPMDIMSLNSDSTLPV) has biased composition (polar residues). The segment covering 746–757 (PSQDAKITDNME) has biased composition (basic and acidic residues). Positions 773-789 (VELTSQKDTVLQKSQSF) are enriched in polar residues. The span at 1105-1122 (INNFPDTSSARQTPTDTT) shows a compositional bias: polar residues. Basic and acidic residues predominate over residues 1128–1137 (KKPELHKSEI). WH2 domains lie at 1167 to 1187 (IHSS…LRKV) and 1207 to 1227 (ERSA…LKKT). The interval 1246–1297 (NVHTEVISPRPTSPDFVPPLPPSFSPPPPPPPPLAPAKPPVVLPPGGNPEAA) is disordered. Residues 1261-1292 (FVPPLPPSFSPPPPPPPPLAPAKPPVVLPPGG) are compositionally biased toward pro residues. The WH2 3 domain occupies 1297–1317 (AREALLEAIRSGSGAQQLRKV).

As to quaternary structure, interacts with pacsin1.

It localises to the cell membrane. The protein resides in the cytoplasm. It is found in the cytoskeleton. Its subcellular location is the cell projection. The protein localises to the ruffle. It localises to the cytosol. In terms of biological role, plays an important role in the reorganization of the actin cytoskeleton. Binds to and sequesters actin monomers (G actin). Nucleates actin polymerization by assembling three actin monomers in cross-filament orientation and thereby promotes growth of actin filaments at the barbed end. Can also mediate actin depolymerization at barbed ends and severing of actin filaments. Promotes formation of cell ruffles. Regulates neuron morphogenesis and increases branching of axons and dendrites. Required for normal embryonic development, including normal development of laterality, normal body size and shape, as well as normal brain, heart and kidney development. Required for normal development of stereocilia and kinocilia in sensory hair cells of neuromasts in the posterior lateral line organ, and thus also for balance keeping and normal swimming behavior. This chain is Protein cordon-bleu (cobl), found in Danio rerio (Zebrafish).